Consider the following 102-residue polypeptide: MICOS complex subunit MIC12 (102 aa).

Residues 4-26 form a helical membrane-spanning segment; that stretch reads VLKLTSVTLAASSLAAAGYFYAF.

Belongs to the MICOS complex subunit Mic12 family. As to quaternary structure, component of the mitochondrial contact site and cristae organizing system (MICOS) complex.

Its subcellular location is the mitochondrion inner membrane. Component of the MICOS complex, a large protein complex of the mitochondrial inner membrane that plays crucial roles in the maintenance of crista junctions, inner membrane architecture, and formation of contact sites to the outer membrane. This chain is MICOS complex subunit MIC12 (AIM5), found in Lachancea thermotolerans (strain ATCC 56472 / CBS 6340 / NRRL Y-8284) (Yeast).